A 120-amino-acid chain; its full sequence is U-scoloptoxin(20)-Cw1a (120 aa).

A signal peptide spans 1–26 (MNSTDRLLGVLLAVVALILLIRISEA). The interval 87 to 106 (SSGKSLTTTKDSSESRKKEI) is disordered. Positions 97–106 (DSSESRKKEI) are enriched in basic and acidic residues.

The protein belongs to the scoloptoxin-20 family. Contains 3 disulfide bonds. As to expression, expressed by the venom gland.

The protein localises to the secreted. This is U-scoloptoxin(20)-Cw1a from Cormocephalus westwoodi (Westwood's green centipede).